Here is a 1041-residue protein sequence, read N- to C-terminus: Probable rhamnogalacturonate lyase C (1041 aa).

Residues 1 to 21 form the signal peptide; that stretch reads MFASTLRKTFVFLGLATYSAA. N-linked (GlcNAc...) asparagine glycosylation is found at N28, N94, N116, N142, N231, N283, N528, and N634. The tract at residues 703–728 is disordered; that stretch reads ISRPCPRKGGTRRRKKERKKEGKKQG. Positions 707–720 are enriched in basic residues; the sequence is CPRKGGTRRRKKER. N-linked (GlcNAc...) asparagine glycosylation occurs at N864.

Belongs to the polysaccharide lyase 4 family.

Its subcellular location is the secreted. The catalysed reaction is Endotype eliminative cleavage of L-alpha-rhamnopyranosyl-(1-&gt;4)-alpha-D-galactopyranosyluronic acid bonds of rhamnogalacturonan I domains in ramified hairy regions of pectin leaving L-rhamnopyranose at the reducing end and 4-deoxy-4,5-unsaturated D-galactopyranosyluronic acid at the non-reducing end.. In terms of biological role, pectinolytic enzymes consist of four classes of enzymes: pectin lyase, polygalacturonase, pectin methylesterase and rhamnogalacturonase. Degrades the rhamnogalacturonan I (RG-I) backbone of pectin. In Emericella nidulans (strain FGSC A4 / ATCC 38163 / CBS 112.46 / NRRL 194 / M139) (Aspergillus nidulans), this protein is Probable rhamnogalacturonate lyase C (rglC).